The primary structure comprises 145 residues: MSNTPLPSSFDAHPEFFQETKWQKFTRRIKEEPLIPIGYAATSYALWRAYKSMKAGDSIELNRMFRARIYGHAFTLFAIVAGGIYYGQERRQRKEFEKALQQKQDQEKRDAWLKELEIRDKEDKNWRQRHAAIEMAAKEAEKKRG.

Positions 6 to 97 (LPSSFDAHPE…QERRQRKEFE (92 aa)) constitute an HIG1 domain. 2 helical membrane passes run 33–50 (PLIP…WRAY) and 69–86 (IYGH…GIYY). Residues 86–144 (YGQERRQRKEFEKALQQKQDQEKRDAWLKELEIRDKEDKNWRQRHAAIEMAAKEAEKKR) are a coiled coil.

This sequence belongs to the RCF1 family. In terms of assembly, associates with the respiratory chain complex III/complex IV supercomplex.

The protein localises to the mitochondrion membrane. Functionally, cytochrome c oxidase subunit which plays a role in assembly of respiratory supercomplexes. The chain is Respiratory supercomplex factor 1, mitochondrial (RCF1) from Ajellomyces capsulatus (strain NAm1 / WU24) (Darling's disease fungus).